The chain runs to 596 residues: Elongation factor 4 (596 aa).

Positions 2-184 (KHIRNFSIIA…VIVDQIPPPE (183 aa)) constitute a tr-type G domain. Residues 14 to 19 (DHGKST) and 131 to 134 (NKID) each bind GTP.

This sequence belongs to the TRAFAC class translation factor GTPase superfamily. Classic translation factor GTPase family. LepA subfamily.

It is found in the cell inner membrane. It carries out the reaction GTP + H2O = GDP + phosphate + H(+). In terms of biological role, required for accurate and efficient protein synthesis under certain stress conditions. May act as a fidelity factor of the translation reaction, by catalyzing a one-codon backward translocation of tRNAs on improperly translocated ribosomes. Back-translocation proceeds from a post-translocation (POST) complex to a pre-translocation (PRE) complex, thus giving elongation factor G a second chance to translocate the tRNAs correctly. Binds to ribosomes in a GTP-dependent manner. In Shewanella sp. (strain ANA-3), this protein is Elongation factor 4.